Here is a 918-residue protein sequence, read N- to C-terminus: Chitin synthase C (918 aa).

Positions 1–63 (MSYNRLGDPY…EMPSSDRLAE (63 aa)) are disordered. The segment covering 22 to 37 (NPSSLSNRSPSPGRPL) has biased composition (low complexity). Helical transmembrane passes span 562–581 (WLNGSFFAAVYAITHFYQLW), 605–625 (LFAWFGIGNFFLVFHILTTYL), 637–657 (VLGVVFEWLYLATLVTCFVLS), and 672–692 (MVYLWVFIMIYLAFAAVFVTV). Asn-712 is a glycosylation site (N-linked (GlcNAc...) asparagine). Helical transmembrane passes span 715–735 (FFSIIVSLGSTYVMWFIASII), 845–865 (VVLVWVFCNFALGAVVLSSAG), and 890–910 (VVLWSVAGLSIFKFLGAMWFL).

It belongs to the chitin synthase family. Class I subfamily. In terms of tissue distribution, mainly expressed in hyphae and conidiphores. Relatively strongly expressed in young cleistothecia and in mature ascospores, but negligible in Huelle cells.

Its subcellular location is the cell membrane. It is found in the cell septum. The protein localises to the cell tip. The enzyme catalyses [(1-&gt;4)-N-acetyl-beta-D-glucosaminyl](n) + UDP-N-acetyl-alpha-D-glucosamine = [(1-&gt;4)-N-acetyl-beta-D-glucosaminyl](n+1) + UDP + H(+). In terms of biological role, polymerizes chitin, a structural polymer of the cell wall and septum, by transferring the sugar moiety of UDP-GlcNAc to the non-reducing end of the growing chitin polymer. ChsC and chsA share critical functions in hyphal wall integrity and differentiation. ChsA and chsC share also overlapping roles in septum formation. This is Chitin synthase C from Emericella nidulans (strain FGSC A4 / ATCC 38163 / CBS 112.46 / NRRL 194 / M139) (Aspergillus nidulans).